We begin with the raw amino-acid sequence, 176 residues long: uncharacterized protein (176 aa).

Low complexity predominate over residues 87–100 (ASASSQLRASRVQS). The interval 87–109 (ASASSQLRASRVQSGTRQSARAG) is disordered.

This is an uncharacterized protein from Homo sapiens (Human).